Here is a 319-residue protein sequence, read N- to C-terminus: MNSISLAIQDLLDDTEYGLELVLLAGGAGVGHRIHSSRIQKPGLALTGYTEHLHPDRVQVLGNTEISYLQQISEQQALIHIQKLCSYPISCFIVTKGLDPPGFLKAEAERAGIPLLVTPHQSSTFISLITKFLEERLLPTTHIHGVLVDVLGVGVLILGKSGIGKSECALDLVIRGHRLVADDVVYVKKKMPAALVGQAAEAIQHHMEIRGLGVINIKNLFGVSSIREKKIIDMVIELVDWDPVQEYDRLGLDDEVYAILDVELPHIKIPVRPGRNLTSIIEVAARNHLLKGMGYHSAREFHEKLLARMEVRPLGNEVE.

Catalysis depends on residues His-144 and Lys-165. Position 159–166 (159–166 (GKSGIGKS)) interacts with ATP. Ser-166 serves as a coordination point for Mg(2+). The active-site Proton acceptor; for phosphorylation activity. Proton donor; for dephosphorylation activity is Asp-183. Residues 207 to 216 (MEIRGLGVIN) form an important for the catalytic mechanism of both phosphorylation and dephosphorylation region. Glu-208 is a binding site for Mg(2+). The active site involves Arg-249. The segment at 270-275 (PVRPGR) is important for the catalytic mechanism of dephosphorylation.

Belongs to the HPrK/P family. Homohexamer. The cofactor is Mg(2+).

It carries out the reaction [HPr protein]-L-serine + ATP = [HPr protein]-O-phospho-L-serine + ADP + H(+). The catalysed reaction is [HPr protein]-O-phospho-L-serine + phosphate + H(+) = [HPr protein]-L-serine + diphosphate. Catalyzes the ATP- as well as the pyrophosphate-dependent phosphorylation of a specific serine residue in HPr, a phosphocarrier protein of the phosphoenolpyruvate-dependent sugar phosphotransferase system (PTS). HprK/P also catalyzes the pyrophosphate-producing, inorganic phosphate-dependent dephosphorylation (phosphorolysis) of seryl-phosphorylated HPr (P-Ser-HPr). The polypeptide is HPr kinase/phosphorylase (Geobacter sulfurreducens (strain ATCC 51573 / DSM 12127 / PCA)).